Reading from the N-terminus, the 160-residue chain is Nutritionally-regulated adipose and cardiac enriched protein homolog (160 aa).

Residues 1–69 (MRTAAGAVSP…AKPQRTSRRV (69 aa)) form a disordered region. Basic and acidic residues-rich tracts occupy residues 12–25 (SRPE…KNEE) and 33–42 (CRAEREDNRK). The chain crosses the membrane as a helical span at residues 101 to 121 (GGSLLLQLCVCVLLVLALGLY).

It is found in the cell membrane. This is Nutritionally-regulated adipose and cardiac enriched protein homolog (NRAC) from Homo sapiens (Human).